The following is a 388-amino-acid chain: Trans-enoyl reductase tenC (388 aa).

51–54 (VDGK) serves as a coordination point for NADP(+). Residue 142 to 149 (VGVASVGM) coordinates substrate. Residues 219–222 (SSES), Tyr237, and 284–285 (LD) contribute to the NADP(+) site. 304-308 (SFTQF) contributes to the substrate binding site. 373-374 (IK) is an NADP(+) binding site.

It belongs to the zinc-containing alcohol dehydrogenase family. As to quaternary structure, monomer.

Its pathway is secondary metabolite biosynthesis. Trans-enoyl reductase; part of the gene cluster that mediates the biosynthesis of tenellin-type 2-pyridones, iron-chelating compounds involved in iron stress tolerance, competition with the natural competitor fungus Metarhizium robertsii and insect hosts infection. TenC collaborates with the hybrid PKS-NRPS synthetase tenS to catalyze the assembly of the polyketide-amino acid backbone, since tenS lacks a designated enoylreductase (ER) domain. Upon formation of the polyketide backbone on the thiotemplate of tenS, the triketide is transferred to the NRPS module and linked to tyrosine to produce the pyrrolidine-2-dione intermediates, including pretellinin A, 11-hydropretellenin A, 12-hydropretellenin A, 13-hydropretellenin A, 14-hydropretellenin A, 12-oxopretellenin A and prototellinin D. The pathway begins with the assembly of the polyketide-amino acid backbone by the hybrid PKS-NRPS tenS with the help of the enoyl reductase tenC. These enzymes catalyze the synthesis of the pyrrolidine-2-dione intermediates pretellinin A, 11-hydropretellenin A, 12-hydropretellenin A, 13-hydropretellenin A, 14-hydropretellenin A, 12-oxopretellenin A and prototellinin D. The cytochrome P450 monooxygenase tenA then catalyzes an oxidative ring expansion of pretenellin A and 14-hydropretellenin A to form the 2-pyridone core, leading to pretenellin B and pyridovericin, respectively. The cytochrome P450 monooxygenase tenB is then required for the selective N-hydroxylation of the 2-pyridone nitrogen of yield tellinin and 15-hydroxytellenin (15-HT), respectively. The UDP-glucosyltransferase GT1 and the methyltransferase MT1, located outside the tenS gene cluster, contribute to the stepwise glycosylation and methylation of 15-HT to obtain the glycoside pyridovericin-N-O-(4-O-methyl-beta-D-glucopyranoside) (PMGP). Additional related compounds such as 1-O-methyl-15-HT, (8Z)-1-O-methyl-15-HT, and O-methyltenellin A are also produced but the enzymes involved in their biosynthesis have still to be determined. The protein is Trans-enoyl reductase tenC of Beauveria bassiana (White muscardine disease fungus).